Consider the following 335-residue polypeptide: Phospho-N-acetylmuramoyl-pentapeptide-transferase (335 aa).

The next 9 membrane-spanning stretches (helical) occupy residues 2–22 (PPLF…LILV), 55–75 (IPTA…LLLL), 77–97 (CNLW…ALGW), 118–137 (FFIQ…IAYG), 153–173 (LPHC…AIVG), 193–213 (VIAC…WAFI), 238–258 (IFMG…CAVL), 263–283 (FMLL…ILQV), and 313–333 (VVRN…FAVF).

The protein belongs to the glycosyltransferase 4 family. MraY subfamily. Mg(2+) serves as cofactor.

It localises to the cell inner membrane. It catalyses the reaction UDP-N-acetyl-alpha-D-muramoyl-L-alanyl-gamma-D-glutamyl-meso-2,6-diaminopimeloyl-D-alanyl-D-alanine + di-trans,octa-cis-undecaprenyl phosphate = di-trans,octa-cis-undecaprenyl diphospho-N-acetyl-alpha-D-muramoyl-L-alanyl-D-glutamyl-meso-2,6-diaminopimeloyl-D-alanyl-D-alanine + UMP. It participates in cell wall biogenesis; peptidoglycan biosynthesis. Its function is as follows. Catalyzes the initial step of the lipid cycle reactions in the biosynthesis of the cell wall peptidoglycan: transfers peptidoglycan precursor phospho-MurNAc-pentapeptide from UDP-MurNAc-pentapeptide onto the lipid carrier undecaprenyl phosphate, yielding undecaprenyl-pyrophosphoryl-MurNAc-pentapeptide, known as lipid I. This Chlamydia muridarum (strain MoPn / Nigg) protein is Phospho-N-acetylmuramoyl-pentapeptide-transferase.